Consider the following 241-residue polypeptide: ATP synthase subunit a (241 aa).

8 helical membrane passes run 29–49, 54–74, 86–106, 114–134, 153–173, 177–197, 200–220, and 221–241; these read NSSF…LFGI, VIPG…ISII, IPLI…GVLP, HVIV…IVGF, WLAP…PVSL, LAAN…FIVN, IFFT…EVFV, and AILQ…DAVK.

It belongs to the ATPase A chain family. F-type ATPases have 2 components, CF(1) - the catalytic core - and CF(0) - the membrane proton channel. CF(1) has five subunits: alpha(3), beta(3), gamma(1), delta(1), epsilon(1). CF(0) has three main subunits: a(1), b(2) and c(9-12). The alpha and beta chains form an alternating ring which encloses part of the gamma chain. CF(1) is attached to CF(0) by a central stalk formed by the gamma and epsilon chains, while a peripheral stalk is formed by the delta and b chains.

It is found in the cell membrane. Its function is as follows. Key component of the proton channel; it plays a direct role in the translocation of protons across the membrane. The protein is ATP synthase subunit a of Wolbachia pipientis wMel.